A 352-amino-acid chain; its full sequence is Nicotinate-nucleotide--dimethylbenzimidazole phosphoribosyltransferase (352 aa).

Glu-316 acts as the Proton acceptor in catalysis.

The protein belongs to the CobT family.

It carries out the reaction 5,6-dimethylbenzimidazole + nicotinate beta-D-ribonucleotide = alpha-ribazole 5'-phosphate + nicotinate + H(+). Its pathway is nucleoside biosynthesis; alpha-ribazole biosynthesis; alpha-ribazole from 5,6-dimethylbenzimidazole: step 1/2. In terms of biological role, catalyzes the synthesis of alpha-ribazole-5'-phosphate from nicotinate mononucleotide (NAMN) and 5,6-dimethylbenzimidazole (DMB). The chain is Nicotinate-nucleotide--dimethylbenzimidazole phosphoribosyltransferase from Yersinia enterocolitica serotype O:8 / biotype 1B (strain NCTC 13174 / 8081).